A 601-amino-acid chain; its full sequence is MAKNRNEIPEKLTWDLTTIYKTDKEWEAELTRIKSELSLVEETDPGHLLDSAESLLTITEKMLSISQQVEKLYVYASMKNDQDTREAKYQEYQSKATALYVKFGEVYAFYEPEFLKISKEVYNKWLGELQKLKNYDHMFERLFAKKAHILSQKEEKLLAAAGEIFESPSETFEIFDNADIKLPMVKNESDEMIQLTHGNYSSLMESKNRGVRKAAYKALYSNYEQYQHTYAKTLQTNVKVHNLNAQIRSYDSARQAALANNFVPEKVYDVLMEAIHQHLPLLHRYIELRKKILGITDLKMYGIYTPLSNLGYKFNYEDGVKKAEEVLAIFGKEYKGKVKAAFEQRWIDVEENIGKRSGAYSGGSYDTNAFMLLNWQETLDDLFTLVHETGHSMHSAFTRENQPYVYGNYPIFLAEIASTTNENILTETLLKESKDDKERFALLNHWLDSFRGTVFRQSQFAEFEQKIHEADAAGEVLTSEYLNSLYGEINEKYYNLAVKGNPEIQYEWARIPHFYYNFYVFQYATGFAAATFLAEKVVHGSTEDRQKYLEYLKAGSSAYPLEVIAKAGVDMESTDYLDAAFELFENRLSELEKLVEKGVHL.

Zn(2+) is bound at residue histidine 387. Residue glutamate 388 is part of the active site. 2 residues coordinate Zn(2+): histidine 391 and histidine 394.

This sequence belongs to the peptidase M3B family. The cofactor is Zn(2+).

Functionally, hydrolyzes peptides containing between 7 and 17 amino acids with a rather wide specificity. The sequence is that of Oligoendopeptidase F, plasmid (pepF1) from Lactococcus lactis subsp. cremoris (Streptococcus cremoris).